Here is a 446-residue protein sequence, read N- to C-terminus: Nuclear distribution protein nudF (446 aa).

Residues 9 to 41 (QAEELHKSMVAYLSSIKASQSSNTLREELGIGD) enclose the LisH domain. A coiled-coil region spans residues 60 to 86 (TGIARLQRKILDLESKITSLQAELDSV). WD repeat units follow at residues 113–154 (SHRD…RTLK), 156–196 (HMRG…ANIR), 200–240 (GHDH…CVRT), 243–282 (SNSIWFLDVSPSFDGKWLVAGGRDQAVTVWEVSSAEPRAA), 285–345 (GHDN…IKTL), 347–386 (GHDNWIRGLVFHPSGKYLFSVSDDKTIRCWDLSQEGRLVK), 391–430 (AHGHFISCIRWAPPPRNAAAEASETTNGVSKKAPTKPAFQ), and 432–446 (VIATGSADSCVRVFK).

The protein belongs to the WD repeat LIS1/nudF family. In terms of assembly, self-associates. Interacts with nudE and dynein.

It is found in the cytoplasm. Its subcellular location is the cytoskeleton. The protein localises to the spindle pole. Its function is as follows. Positively regulates the activity of the minus-end directed microtubule motor protein dynein. May enhance dynein-mediated microtubule sliding by targeting dynein to the microtubule plus end. Required for nuclear migration during vegetative growth as well as development. Required for retrograde early endosome (EE) transport from the hyphal tip. Required for localization of dynein to the mitotic spindle poles. Recruits additional proteins to the dynein complex at SPBs. The protein is Nuclear distribution protein nudF of Aspergillus terreus (strain NIH 2624 / FGSC A1156).